The chain runs to 628 residues: 1-deoxy-D-xylulose-5-phosphate synthase (628 aa).

Residues histidine 72 and 113 to 115 each bind thiamine diphosphate; that span reads GHA. Aspartate 144 provides a ligand contact to Mg(2+). Residues 145–146, asparagine 174, tyrosine 287, and glutamate 370 contribute to the thiamine diphosphate site; that span reads GA. Position 174 (asparagine 174) interacts with Mg(2+).

It belongs to the transketolase family. DXPS subfamily. In terms of assembly, homodimer. Mg(2+) serves as cofactor. It depends on thiamine diphosphate as a cofactor.

The catalysed reaction is D-glyceraldehyde 3-phosphate + pyruvate + H(+) = 1-deoxy-D-xylulose 5-phosphate + CO2. Its pathway is metabolic intermediate biosynthesis; 1-deoxy-D-xylulose 5-phosphate biosynthesis; 1-deoxy-D-xylulose 5-phosphate from D-glyceraldehyde 3-phosphate and pyruvate: step 1/1. Functionally, catalyzes the acyloin condensation reaction between C atoms 2 and 3 of pyruvate and glyceraldehyde 3-phosphate to yield 1-deoxy-D-xylulose-5-phosphate (DXP). The polypeptide is 1-deoxy-D-xylulose-5-phosphate synthase (Prochlorococcus marinus (strain NATL2A)).